Reading from the N-terminus, the 62-residue chain is Potassium channel toxin alpha-KTx 18.3 (62 aa).

An N-terminal signal peptide occupies residues 1 to 26; sequence MHFSGVAFILISMVLIGSIFETTVEA. Disulfide bonds link Cys34-Cys53, Cys39-Cys58, and Cys43-Cys60.

It belongs to the short scorpion toxin superfamily. Potassium channel inhibitor family. Alpha-KTx 18 subfamily. As to expression, expressed by the venom gland.

Its subcellular location is the secreted. In terms of biological role, probable voltage-gated potassium channel inhibitor. The protein is Potassium channel toxin alpha-KTx 18.3 of Tityus discrepans (Venezuelan scorpion).